The primary structure comprises 137 residues: ATP synthase epsilon chain (137 aa).

Belongs to the ATPase epsilon chain family. In terms of assembly, F-type ATPases have 2 components, CF(1) - the catalytic core - and CF(0) - the membrane proton channel. CF(1) has five subunits: alpha(3), beta(3), gamma(1), delta(1), epsilon(1). CF(0) has three main subunits: a, b and c.

Its subcellular location is the cell membrane. Produces ATP from ADP in the presence of a proton gradient across the membrane. The protein is ATP synthase epsilon chain of Caldicellulosiruptor saccharolyticus (strain ATCC 43494 / DSM 8903 / Tp8T 6331).